A 255-amino-acid chain; its full sequence is Hydroxyacylglutathione hydrolase (255 aa).

The Zn(2+) site is built by His-56, His-58, Asp-60, His-61, His-114, Asp-133, and His-171.

Belongs to the metallo-beta-lactamase superfamily. Glyoxalase II family. As to quaternary structure, monomer. Zn(2+) is required as a cofactor.

The catalysed reaction is an S-(2-hydroxyacyl)glutathione + H2O = a 2-hydroxy carboxylate + glutathione + H(+). It functions in the pathway secondary metabolite metabolism; methylglyoxal degradation; (R)-lactate from methylglyoxal: step 2/2. Its function is as follows. Thiolesterase that catalyzes the hydrolysis of S-D-lactoyl-glutathione to form glutathione and D-lactic acid. The sequence is that of Hydroxyacylglutathione hydrolase from Rhodopseudomonas palustris (strain BisB5).